A 304-amino-acid polypeptide reads, in one-letter code: Non-specific ribonucleoside hydrolase RihC (304 aa).

H233 is a catalytic residue.

It belongs to the IUNH family. RihC subfamily.

Hydrolyzes both purine and pyrimidine ribonucleosides with a broad-substrate specificity. The protein is Non-specific ribonucleoside hydrolase RihC of Shigella sonnei (strain Ss046).